A 757-amino-acid polypeptide reads, in one-letter code: Chloride anion exchanger (757 aa).

The Cytoplasmic segment spans residues 1–71; that stretch reads MIEAIGNQYV…SWLPAYKIKE (71 aa). The chain crosses the membrane as a helical span at residues 72–92; it reads WLLSDIVSGISTGLVAVLQGL. Ala-93 is a topological domain (extracellular). The chain crosses the membrane as a helical span at residues 94–114; sequence FALLVNIPPAYGLYAAFFPVI. Residues 115 to 124 are Cytoplasmic-facing; the sequence is TYFFLGTSRH. The helical transmembrane segment at 125 to 145 threads the bilayer; that stretch reads ISVGPFPVLSMMVGVVVTRVA. At 146–176 the chain is on the extracellular side; the sequence is SGSDTSPALSSSSAENDSMIEEKVMVAASVT. N-linked (GlcNAc...) asparagine glycosylation is present at Asn-161. Residues 177 to 197 form a helical membrane-spanning segment; it reads VLSGIIQLLLGVLQIGFVVIY. The Cytoplasmic portion of the chain corresponds to 198 to 201; sequence LSES. The helical transmembrane segment at 202–222 threads the bilayer; it reads LISGFTTAAAIHVLVSQLKFM. At 223–250 the chain is on the extracellular side; sequence LQLTVPAHSDPFSIFKVLESVFSQIQKT. Residues 251–271 form a helical membrane-spanning segment; sequence NIADLVTSVIILVVVFVVKEI. At 272–278 the chain is on the cytoplasmic side; the sequence is NQRYRSK. A helical membrane pass occupies residues 279-299; that stretch reads LPVPIPIELIMTVIATGISYG. Topologically, residues 300–335 are extracellular; that stretch reads CNFEQRFGVAVVGNMSLGFQPPITPSVEVFQDTIGD. The helical transmembrane segment at 336–356 threads the bilayer; that stretch reads CFGIAIVGFAVAFSVASVYSL. The Cytoplasmic segment spans residues 357–367; that stretch reads KYDYPIDGNQE. Residues 368 to 388 form a helical membrane-spanning segment; that stretch reads LIALGVSNIFTGAFKGFAGST. Over 389-404 the chain is Extracellular; that stretch reads ALSRSGVQESTGGKTQ. A helical transmembrane segment spans residues 405 to 425; that stretch reads VAGLLSAVIVLIVIVAIGFLL. Residues 426-462 lie on the Cytoplasmic side of the membrane; sequence QPLQKSVLAALALGNLKGMLMQFAEIGRLWKKDKYDC. The chain crosses the membrane as a helical span at residues 463-483; the sequence is LIWIMTFIFAIVLGLGLGLAA. Over 484 to 757 the chain is Extracellular; it reads SVAFQLLTIV…ECQVPVETKF (274 aa). In terms of domain architecture, STAS spans 518–713; the sequence is NYADVYEPEG…LTIHDAILHI (196 aa). Positions 754–757 match the PDZ-binding motif; it reads ETKF.

It belongs to the SLC26A/SulP transporter (TC 2.A.53) family. As to quaternary structure, interacts with PDZK1, CFTR, SLC26A6 and NHERF1. Interacts (via PDZ-binding motif) with NHERF4 (via the third PDZ domain); interaction leads to decreased expression of SLC26A3 on the cell membrane resulting in its reduced exchanger activity. Post-translationally, N-glycosylation is required for efficient cell surface expression, and protection from proteolytic degradation.

Its subcellular location is the apical cell membrane. It localises to the membrane. It is found in the cell membrane. The catalysed reaction is hydrogencarbonate(in) + 2 chloride(out) = hydrogencarbonate(out) + 2 chloride(in). In terms of biological role, mediates chloride-bicarbonate exchange with a chloride bicarbonate stoichiometry of 2:1 in the intestinal epithelia. Plays a role in the chloride and bicarbonate homeostasis during sperm epididymal maturation and capacitation. The sequence is that of Chloride anion exchanger (Slc26a3) from Rattus norvegicus (Rat).